Here is a 235-residue protein sequence, read N- to C-terminus: Purine nucleoside phosphorylase DeoD-type (235 aa).

His-4 contacts a purine D-ribonucleoside. Phosphate-binding positions include Gly-20, Arg-24, Arg-43, and 87-90 (RVGT). A purine D-ribonucleoside contacts are provided by residues 179–181 (EME) and 203–204 (SD). Asp-204 serves as the catalytic Proton donor.

The protein belongs to the PNP/UDP phosphorylase family. Homohexamer; trimer of homodimers.

It catalyses the reaction a purine D-ribonucleoside + phosphate = a purine nucleobase + alpha-D-ribose 1-phosphate. The enzyme catalyses a purine 2'-deoxy-D-ribonucleoside + phosphate = a purine nucleobase + 2-deoxy-alpha-D-ribose 1-phosphate. Functionally, catalyzes the reversible phosphorolytic breakdown of the N-glycosidic bond in the beta-(deoxy)ribonucleoside molecules, with the formation of the corresponding free purine bases and pentose-1-phosphate. The polypeptide is Purine nucleoside phosphorylase DeoD-type (Exiguobacterium sibiricum (strain DSM 17290 / CCUG 55495 / CIP 109462 / JCM 13490 / 255-15)).